A 445-amino-acid polypeptide reads, in one-letter code: MADRNDQILTPSQLNSLARDLLEGSFPLVWVEAELSSVTRPASGHLYFTLKDARAQIRCAMFKPKSTWLKFQPREGLRVLARGRLTLYEARGDYQLVLDHMEEAGEGALRRAFDELRARLAAEGLFDAERKQALPAHVQRLAVITSPSGAAVRDVLSVLARRFPLLEVDLLPSLVQGDSAAAQITSLLQRADASGRYDVILITRGGGSLEDLWAFNDERLARAIAAAQTPVVSAVGHETDFSLSDFVADVRAPTPSVAAELLVPDQRELVARVRRAQARMTQLQQHALGNAMQRADRLALRLRAQSPQARLQLLHRRQQDAGRQLRARMMQVLERLQARVQQGQAQLQAHNPQRQLAGLQQRLRALHPQAAMQRRLQHDQLQLRSIARSLEAVSPLATVARGYAIVTRPADGSVVRSAAEVVTGERLRAQLADGSIQVRVESGES.

Belongs to the XseA family. Heterooligomer composed of large and small subunits.

The protein resides in the cytoplasm. It carries out the reaction Exonucleolytic cleavage in either 5'- to 3'- or 3'- to 5'-direction to yield nucleoside 5'-phosphates.. Its function is as follows. Bidirectionally degrades single-stranded DNA into large acid-insoluble oligonucleotides, which are then degraded further into small acid-soluble oligonucleotides. This is Exodeoxyribonuclease 7 large subunit from Xanthomonas euvesicatoria pv. vesicatoria (strain 85-10) (Xanthomonas campestris pv. vesicatoria).